The following is a 95-amino-acid chain: HssA/B-like protein 45 (95 aa).

The segment at 1–31 (MTLFSSISSISNPMTSSKSSIASFGSGTSMS) is disordered.

This sequence belongs to the hssA/B family.

The polypeptide is HssA/B-like protein 45 (hssl45) (Dictyostelium discoideum (Social amoeba)).